We begin with the raw amino-acid sequence, 730 residues long: Dual function macrocyclase-peptidase POPB (730 aa).

The interval 1–34 (MSSVTWAPGNYPSTRRSDHVDTYQSASKGEVPVP) is disordered. Active-site charge relay system residues include S577, D661, and H698.

This sequence belongs to the peptidase S9A family. Monomer.

It catalyses the reaction Hydrolysis of Pro-|-Xaa &gt;&gt; Ala-|-Xaa in oligopeptides.. In terms of biological role, dual function macrocyclase-peptidase involved in the biosynthesis of the highly toxic amanitin toxin family of macrocycles. Cleaves peptide bonds on the C-terminal side of prolyl residues. The enzyme first removes 10 residues from the N-terminus of a 35-residue substrate. Conformational trapping of the 25 amino-acid peptide forces the enzyme to release this intermediate rather than proceed to macrocyclization. The enzyme rebinds the 25 amino-acid peptide in a different conformation and catalyzes macrocyclization of the N-terminal eight residues. The protein is Dual function macrocyclase-peptidase POPB of Galerina marginata (strain CBS 339.88).